A 160-amino-acid polypeptide reads, in one-letter code: MRIGLFAVGRLKAGPEKDLAARYLDRFAKAGPAVGLELARLVEINESRAANAQTRKREEAAQLEKTLADGSLLLLLDERGKALDSESFATLLGTFRDGGKRDLMIAIGGADGLDPALHARADAVLCLGKMTWPHQLVRILIAEQLYRAVTILAGHPYHRA.

Residues L76, G108, and 127–132 (LGKMTW) each bind S-adenosyl-L-methionine.

Belongs to the RNA methyltransferase RlmH family. In terms of assembly, homodimer.

Its subcellular location is the cytoplasm. The catalysed reaction is pseudouridine(1915) in 23S rRNA + S-adenosyl-L-methionine = N(3)-methylpseudouridine(1915) in 23S rRNA + S-adenosyl-L-homocysteine + H(+). Its function is as follows. Specifically methylates the pseudouridine at position 1915 (m3Psi1915) in 23S rRNA. The polypeptide is Ribosomal RNA large subunit methyltransferase H (Sinorhizobium fredii (strain NBRC 101917 / NGR234)).